The primary structure comprises 397 residues: Tryptophan synthase beta chain (397 aa).

Lys-86 carries the post-translational modification N6-(pyridoxal phosphate)lysine.

It belongs to the TrpB family. In terms of assembly, tetramer of two alpha and two beta chains. Requires pyridoxal 5'-phosphate as cofactor.

It carries out the reaction (1S,2R)-1-C-(indol-3-yl)glycerol 3-phosphate + L-serine = D-glyceraldehyde 3-phosphate + L-tryptophan + H2O. Its pathway is amino-acid biosynthesis; L-tryptophan biosynthesis; L-tryptophan from chorismate: step 5/5. In terms of biological role, the beta subunit is responsible for the synthesis of L-tryptophan from indole and L-serine. The chain is Tryptophan synthase beta chain from Aeromonas hydrophila subsp. hydrophila (strain ATCC 7966 / DSM 30187 / BCRC 13018 / CCUG 14551 / JCM 1027 / KCTC 2358 / NCIMB 9240 / NCTC 8049).